We begin with the raw amino-acid sequence, 296 residues long: MGQFTLTPSEQEIQAFLKQYKKYLSSSKNPYIRYFFRLEQATASVYTSGKLLLQGEEADKYALFFKETADLTRPPQKITYQAMIGTDEVGNGSYFGGLAVVASFVTKEQEDFLRKLGVGDSKTLTDQKIRQLAPILKEKITHQALLLSPKKYNQVIASGYNAVSVKVALHNQAIYLLLEKGIKPDQIVIDAFTSSTNYQRYVKQERNQVSQAIHLEEKAEGKYLAVAVSSIIARDLFLENLEILSQELGYQLPSGAGAKSDQVASQILKAYGMAGLETSAKLHFKNTQKAKQLLER.

An RNase H type-2 domain is found at 81–296 (QAMIGTDEVG…TQKAKQLLER (216 aa)). The a divalent metal cation site is built by aspartate 87, glutamate 88, and aspartate 190.

The protein belongs to the RNase HII family. RnhC subfamily. The cofactor is Mn(2+). It depends on Mg(2+) as a cofactor.

It localises to the cytoplasm. It carries out the reaction Endonucleolytic cleavage to 5'-phosphomonoester.. Its function is as follows. Endonuclease that specifically degrades the RNA of RNA-DNA hybrids. In Streptococcus gordonii (strain Challis / ATCC 35105 / BCRC 15272 / CH1 / DL1 / V288), this protein is Ribonuclease HIII.